The following is a 365-amino-acid chain: Phospho-N-acetylmuramoyl-pentapeptide-transferase (365 aa).

10 consecutive transmembrane segments (helical) span residues 22-42 (YISV…LALG), 74-94 (TMGG…WGDL), 95-115 (TSIY…IGFF), 133-153 (YKFA…FYLL), 168-188 (SLYI…IING), 201-221 (GLAI…AYIE), 240-260 (LAEV…FLWF), 267-287 (VFMG…IAVM), 292-312 (LIFF…MLQV), and 342-362 (KVVI…LAAI).

Belongs to the glycosyltransferase 4 family. MraY subfamily. It depends on Mg(2+) as a cofactor.

The protein resides in the cell inner membrane. It carries out the reaction UDP-N-acetyl-alpha-D-muramoyl-L-alanyl-gamma-D-glutamyl-meso-2,6-diaminopimeloyl-D-alanyl-D-alanine + di-trans,octa-cis-undecaprenyl phosphate = di-trans,octa-cis-undecaprenyl diphospho-N-acetyl-alpha-D-muramoyl-L-alanyl-D-glutamyl-meso-2,6-diaminopimeloyl-D-alanyl-D-alanine + UMP. The protein operates within cell wall biogenesis; peptidoglycan biosynthesis. Functionally, catalyzes the initial step of the lipid cycle reactions in the biosynthesis of the cell wall peptidoglycan: transfers peptidoglycan precursor phospho-MurNAc-pentapeptide from UDP-MurNAc-pentapeptide onto the lipid carrier undecaprenyl phosphate, yielding undecaprenyl-pyrophosphoryl-MurNAc-pentapeptide, known as lipid I. This is Phospho-N-acetylmuramoyl-pentapeptide-transferase from Francisella tularensis subsp. tularensis (strain WY96-3418).